Reading from the N-terminus, the 466-residue chain is Cysteine--tRNA ligase (466 aa).

Cysteine 27 is a Zn(2+) binding site. Residues 29–39 (PTVYNYIHIGN) carry the 'HIGH' region motif. Zn(2+) is bound by residues cysteine 207, histidine 232, and glutamate 236. The 'KMSKS' region signature appears at 264–268 (KMSKS). ATP is bound at residue lysine 267.

It belongs to the class-I aminoacyl-tRNA synthetase family. In terms of assembly, monomer. Zn(2+) is required as a cofactor.

Its subcellular location is the cytoplasm. The enzyme catalyses tRNA(Cys) + L-cysteine + ATP = L-cysteinyl-tRNA(Cys) + AMP + diphosphate. The polypeptide is Cysteine--tRNA ligase (Thermoanaerobacter pseudethanolicus (strain ATCC 33223 / 39E) (Clostridium thermohydrosulfuricum)).